The primary structure comprises 335 residues: Glucokinase (335 aa).

11–16 serves as a coordination point for ATP; sequence ADIGGT.

Belongs to the bacterial glucokinase family.

Its subcellular location is the cytoplasm. It catalyses the reaction D-glucose + ATP = D-glucose 6-phosphate + ADP + H(+). This chain is Glucokinase, found in Stenotrophomonas maltophilia (strain R551-3).